The chain runs to 176 residues: Non-specific lipid transfer protein GPI-anchored 12 (176 aa).

The signal sequence occupies residues 1-20 (MLTTNTLAVLLLLFLSLCSG). Cystine bridges form between Cys-40–Cys-83, Cys-50–Cys-67, Cys-68–Cys-110, and Cys-81–Cys-120. Asn-46 carries an N-linked (GlcNAc...) asparagine glycan. Asn-149 carries the GPI-anchor amidated asparagine lipid modification. Residues 150 to 176 (GAMTTKYCGVALNSLALLLLFTFLSLS) constitute a propeptide, removed in mature form.

The protein belongs to the plant LTP family. Preferentially expressed in the endodermis of hypocotyls and roots of seedlings, and in petals and anthers of inflorescences. May also be expressed in siliques, carpels and pedicels.

Its subcellular location is the cell membrane. Probable lipid transfer protein. This chain is Non-specific lipid transfer protein GPI-anchored 12, found in Arabidopsis thaliana (Mouse-ear cress).